The following is a 459-amino-acid chain: Methylenetetrahydrofolate--tRNA-(uracil-5-)-methyltransferase TrmFO (459 aa).

Position 26–31 (26–31 (GGGLAG)) interacts with FAD.

This sequence belongs to the MnmG family. TrmFO subfamily. The cofactor is FAD.

The protein resides in the cytoplasm. It catalyses the reaction uridine(54) in tRNA + (6R)-5,10-methylene-5,6,7,8-tetrahydrofolate + NADH + H(+) = 5-methyluridine(54) in tRNA + (6S)-5,6,7,8-tetrahydrofolate + NAD(+). It carries out the reaction uridine(54) in tRNA + (6R)-5,10-methylene-5,6,7,8-tetrahydrofolate + NADPH + H(+) = 5-methyluridine(54) in tRNA + (6S)-5,6,7,8-tetrahydrofolate + NADP(+). Catalyzes the folate-dependent formation of 5-methyl-uridine at position 54 (M-5-U54) in all tRNAs. The protein is Methylenetetrahydrofolate--tRNA-(uracil-5-)-methyltransferase TrmFO of Synechococcus sp. (strain JA-2-3B'a(2-13)) (Cyanobacteria bacterium Yellowstone B-Prime).